Here is a 589-residue protein sequence, read N- to C-terminus: Cytoplasmic polyadenylation element-binding protein 2 (589 aa).

2 disordered regions span residues 1–103 (MPPP…QAAA) and 118–140 (PLLK…SMSW). The span at 24–33 (FFPSFSPVSP) shows a compositional bias: low complexity. The segment covering 44–53 (SGGGGGGFGG) has biased composition (gly residues). Residues 60–81 (VPPPPPPAMNIPQQQPPPPAAP) show a composition bias toward pro residues. Composition is skewed to low complexity over residues 82-103 (QQPQ…QAAA) and 130-140 (SSGWGTGSMSW). Ser-89 is subject to Phosphoserine. 2 consecutive RRM domains span residues 332-423 (RKVF…PWNL) and 440-522 (KTIF…PYVL).

The protein belongs to the RRM CPEB family. As to quaternary structure, interacts with TENT2/GLD2.

It localises to the cytoplasm. May play a role in translational regulation of stored mRNAs in transcriptionally inactive haploid spermatids. Binds to poly(U) RNA oligomers. Required for cell cycle progression, specifically for the transition from metaphase to anaphase. This Homo sapiens (Human) protein is Cytoplasmic polyadenylation element-binding protein 2 (CPEB2).